Reading from the N-terminus, the 116-residue chain is Large ribosomal subunit protein uL18 (116 aa).

This sequence belongs to the universal ribosomal protein uL18 family. In terms of assembly, part of the 50S ribosomal subunit; part of the 5S rRNA/L5/L18/L25 subcomplex. Contacts the 5S and 23S rRNAs.

Its function is as follows. This is one of the proteins that bind and probably mediate the attachment of the 5S RNA into the large ribosomal subunit, where it forms part of the central protuberance. In Chromohalobacter salexigens (strain ATCC BAA-138 / DSM 3043 / CIP 106854 / NCIMB 13768 / 1H11), this protein is Large ribosomal subunit protein uL18.